Consider the following 272-residue polypeptide: MCQVFGVSRSGYYNWVQHEPSDRKQSDERLKLEIKVAHIRTRETYGTRRLQTELAENGIIVGRDRLARLRKELRLRCKQKRKFRATTNSNHNLPVAPNLLNQTFAPTAPNQVWVADLTYVATQEGWLYLAGIKDVYTCEIVRYAMGERMTKELTGKALFMALRSQRPPAGLIHHSDRGSQYCAYDYRVIQEQSGLKTSMSRKGNCYDNAPMESFWGTLKNESLSHYRFNNRDEAISVIREYIEIFYNRQRRHSRLGNISPAAFREKYHQMAA.

The Integrase catalytic domain occupies 105–268; that stretch reads APTAPNQVWV…SPAAFREKYH (164 aa).

The protein is Insertion element IS600 uncharacterized 31 kDa protein of Shigella sonnei.